Reading from the N-terminus, the 952-residue chain is MSSSSYNPYKNNVNDRLINNSTDSFQDNDQGIPNNNDTFLSRIFGLNSIYNQLQDNYQYYDPEFDSSLNQQLQQSIQENDEAEDESLLPQHQQQQQQAAPMDLSIQDKSAKQKSKSSSLLNSDSDSDLSSSEDSYVRPNIPQIPSTPIETENQGSSSKIKFSIPQRAKNFVGKLHPHHEPTLPVYQTPQEFRRNLPQQQRASATVNTNYQRTRNNNRRFIIPPKERALYLWANITNMDEFLSDVYYYYRGRGLLNIVLSRGFDLIILIFILIFTVFLKWGIDYSIFFDNLHQEESKHITLNDMIIPNYFATIPLSIKFILFGFSVYILLRSVQLYLDYNYKLKELKNFYHYLLDVTDDELMTISWKTIVEKLMLLKDYNSLTSTTKSNNFSENHYVNDLSSKVRLNAHDIANRIMRRENYMIALINKDILDLSVLFMNEKSLLTKTLEWNLKLCIDNFIYNQQGQINGKILKEYNRNQLARELTSRFKLAAIINLILSPFIVIYFVLLYFFRYFNEYKSNPASILGLRQYTPYAEWKLREYNELSHLFNKRLIMSMGPANTYIDQFPKGFLVVNLMRLINFISGSILAVLVIMGILLEDENHSFWSFEITDGRSALFYISIFGTIWAITASSATGTSHESTISTTSQSSNSNSNSNAASTFVYDPEASLRYVAQFTHYLPSSWNKKLHTIQVKNEFCQLYCLKIIIIINEILSSVLTPFILWFKISHNSGNIIDFYREYSIHVDGLGYVCYFAMFNFEEKDKNMMSDLNKSKKRRKRMKNKMNKYGKTKMVNPISGKTVNSEIEMTKISKSESERSSDDESGNEQDYDNDEELDYLSYKKDDKMIKSYMYFLESYGGSKQPQPQPPQQQQHPQNQNQTVGGLRNRNPIQSIDPAIMTGNYYDQQSLNSSIYNINYKFDDSGLLQDETMNSSSRKKGGVLGMLNQFYKQDINR.

Disordered stretches follow at residues 1–33 (MSSS…QGIP) and 69–159 (NQQL…SSKI). The Cytoplasmic portion of the chain corresponds to 1-260 (MSSSSYNPYK…RGLLNIVLSR (260 aa)). Residues 115-133 (KSSSLLNSDSDSDLSSSED) show a composition bias toward low complexity. Polar residues predominate over residues 142-159 (QIPSTPIETENQGSSSKI). The helical transmembrane segment at 261 to 281 (GFDLIILIFILIFTVFLKWGI) threads the bilayer. Residues 282–308 (DYSIFFDNLHQEESKHITLNDMIIPNY) lie on the Lumenal side of the membrane. Residues 309 to 329 (FATIPLSIKFILFGFSVYILL) form a helical membrane-spanning segment. The Cytoplasmic portion of the chain corresponds to 330 to 490 (RSVQLYLDYN…RELTSRFKLA (161 aa)). The stretch at 491-511 (AIINLILSPFIVIYFVLLYFF) is an intramembrane region. Over 512-577 (RYFNEYKSNP…KGFLVVNLMR (66 aa)) the chain is Cytoplasmic. A helical membrane pass occupies residues 578–598 (LINFISGSILAVLVIMGILLE). At 599-614 (DENHSFWSFEITDGRS) the chain is on the lumenal side. The chain crosses the membrane as a helical span at residues 615-635 (ALFYISIFGTIWAITASSATG). Residues 636 to 702 (TSHESTISTT…KNEFCQLYCL (67 aa)) are Cytoplasmic-facing. The stretch at 703-723 (KIIIIINEILSSVLTPFILWF) is an intramembrane region. At 724–952 (KISHNSGNII…NQFYKQDINR (229 aa)) the chain is on the cytoplasmic side. The segment covering 806 to 818 (TKISKSESERSSD) has biased composition (basic and acidic residues). Disordered stretches follow at residues 806-832 (TKIS…NDEE) and 855-889 (YGGS…NPIQ). The span at 819–832 (DESGNEQDYDNDEE) shows a compositional bias: acidic residues. Positions 867-877 (QQQQHPQNQNQ) are enriched in low complexity.

This sequence belongs to the ATG9 family. As to quaternary structure, homotrimer; forms a homotrimer with a central pore that forms a path between the two membrane leaflets. Post-translationally, phosphorylated by ATG1. ATG1 phosphorylation is required for preautophagosome elongation.

Its subcellular location is the preautophagosomal structure membrane. The protein resides in the cytoplasmic vesicle membrane. It localises to the golgi apparatus membrane. The protein localises to the endoplasmic reticulum membrane. The catalysed reaction is a 1,2-diacyl-sn-glycero-3-phosphocholine(in) = a 1,2-diacyl-sn-glycero-3-phosphocholine(out). It carries out the reaction a 1,2-diacyl-sn-glycero-3-phospho-L-serine(in) = a 1,2-diacyl-sn-glycero-3-phospho-L-serine(out). The enzyme catalyses a 1,2-diacyl-sn-glycero-3-phosphoethanolamine(in) = a 1,2-diacyl-sn-glycero-3-phosphoethanolamine(out). It catalyses the reaction a 1,2-diacyl-sn-glycero-3-phospho-(1D-myo-inositol-3-phosphate)(in) = a 1,2-diacyl-sn-glycero-3-phospho-(1D-myo-inositol-3-phosphate)(out). Phospholipid scramblase involved in autophagy and cytoplasm to vacuole transport (Cvt) vesicle formation. Cycles between the preautophagosomal structure/phagophore assembly site (PAS) and the cytoplasmic vesicle pool and supplies membrane for the growing autophagosome. Lipid scramblase activity plays a key role in preautophagosomal structure/phagophore assembly by distributing the phospholipids that arrive through atg2 from the cytoplasmic to the luminal leaflet of the bilayer, thereby driving autophagosomal membrane expansion. Required for mitophagy. Also involved in endoplasmic reticulum-specific autophagic process and is essential for the survival of cells subjected to severe ER stress. Different machineries are required for anterograde trafficking to the PAS during either the Cvt pathway or bulk autophagy and for retrograde trafficking. In Candida albicans (strain SC5314 / ATCC MYA-2876) (Yeast), this protein is Autophagy-related protein 9 (ATG9).